The sequence spans 490 residues: ATP synthase subunit beta, chloroplastic (490 aa).

ATP is bound at residue 170–177 (GGAGVGKT).

Belongs to the ATPase alpha/beta chains family. In terms of assembly, F-type ATPases have 2 components, CF(1) - the catalytic core - and CF(0) - the membrane proton channel. CF(1) has five subunits: alpha(3), beta(3), gamma(1), delta(1), epsilon(1). CF(0) has four main subunits: a(1), b(1), b'(1) and c(9-12).

The protein localises to the plastid. Its subcellular location is the chloroplast thylakoid membrane. The enzyme catalyses ATP + H2O + 4 H(+)(in) = ADP + phosphate + 5 H(+)(out). In terms of biological role, produces ATP from ADP in the presence of a proton gradient across the membrane. The catalytic sites are hosted primarily by the beta subunits. In Pinus koraiensis (Korean pine), this protein is ATP synthase subunit beta, chloroplastic.